Here is a 71-residue protein sequence, read N- to C-terminus: MENNRKIISKNNINVQVFLVRSLIGKLNKKVKVLKALGLNKIGDKKVHFLNESIKGMLNETINMILLSEVM.

It belongs to the universal ribosomal protein uL30 family. Part of the 50S ribosomal subunit.

This chain is Large ribosomal subunit protein uL30, found in Borreliella burgdorferi (strain ATCC 35210 / DSM 4680 / CIP 102532 / B31) (Borrelia burgdorferi).